Consider the following 88-residue polypeptide: uncharacterized protein (88 aa).

The tract at residues 1 to 54 is disordered; sequence AVDAYDDDDNLKNEEGDYYNESDDGYSGDEEEEEKQEEDEQDDDDLQFDDGVPE. Over residues 16–53 the composition is skewed to acidic residues; it reads GDYYNESDDGYSGDEEEEEKQEEDEQDDDDLQFDDGVP.

In terms of tissue distribution, predominantly in developing fruit.

This is an uncharacterized protein from Fragaria ananassa (Strawberry).